The primary structure comprises 366 residues: Alanine racemase (366 aa).

Residue Lys-40 is the Proton acceptor; specific for D-alanine of the active site. Lys-40 is modified (N6-(pyridoxal phosphate)lysine). Position 136 (Arg-136) interacts with substrate. The active-site Proton acceptor; specific for L-alanine is Tyr-263. Met-310 serves as a coordination point for substrate.

This sequence belongs to the alanine racemase family. The cofactor is pyridoxal 5'-phosphate.

The enzyme catalyses L-alanine = D-alanine. Its pathway is amino-acid biosynthesis; D-alanine biosynthesis; D-alanine from L-alanine: step 1/1. In terms of biological role, catalyzes the interconversion of L-alanine and D-alanine. May also act on other amino acids. This is Alanine racemase (alr) from Streptococcus equi subsp. equi (strain 4047).